Consider the following 156-residue polypeptide: Aspartate carbamoyltransferase regulatory chain (156 aa).

Cysteine 109, cysteine 114, cysteine 140, and cysteine 143 together coordinate Zn(2+).

This sequence belongs to the PyrI family. In terms of assembly, contains catalytic and regulatory chains. Zn(2+) is required as a cofactor.

Its function is as follows. Involved in allosteric regulation of aspartate carbamoyltransferase. This chain is Aspartate carbamoyltransferase regulatory chain, found in Methanosarcina barkeri (strain Fusaro / DSM 804).